A 333-amino-acid polypeptide reads, in one-letter code: Receptor polysaccharide phosphotransferase WefC (333 aa).

Belongs to the stealth family.

Part of the type 2Gn receptor polysaccharide (RPS) biosynthesis locus. Essential for cell surface RPS production, and for synthesis of the host-like GalNAc beta 1-3Gal (Gn) motif of the RPS. Probably encodes a 1-3Gal alpha transferase. In Streptococcus gordonii, this protein is Receptor polysaccharide phosphotransferase WefC (wefC).